Here is a 450-residue protein sequence, read N- to C-terminus: UDP-N-acetylmuramoylalanine--D-glutamate ligase (450 aa).

An ATP-binding site is contributed by 119-125; it reads GTNGKTT.

The protein belongs to the MurCDEF family.

The protein resides in the cytoplasm. It carries out the reaction UDP-N-acetyl-alpha-D-muramoyl-L-alanine + D-glutamate + ATP = UDP-N-acetyl-alpha-D-muramoyl-L-alanyl-D-glutamate + ADP + phosphate + H(+). The protein operates within cell wall biogenesis; peptidoglycan biosynthesis. In terms of biological role, cell wall formation. Catalyzes the addition of glutamate to the nucleotide precursor UDP-N-acetylmuramoyl-L-alanine (UMA). The polypeptide is UDP-N-acetylmuramoylalanine--D-glutamate ligase (Lactococcus lactis subsp. lactis (strain IL1403) (Streptococcus lactis)).